Reading from the N-terminus, the 860-residue chain is DNA mismatch repair protein MutS (860 aa).

Residue 620 to 627 (GPNMGGKS) participates in ATP binding.

Belongs to the DNA mismatch repair MutS family.

In terms of biological role, this protein is involved in the repair of mismatches in DNA. It is possible that it carries out the mismatch recognition step. This protein has a weak ATPase activity. The sequence is that of DNA mismatch repair protein MutS from Dechloromonas aromatica (strain RCB).